Reading from the N-terminus, the 225-residue chain is Phosphoribosylformylglycinamidine synthase subunit PurQ (225 aa).

The Glutamine amidotransferase type-1 domain occupies 4–225 (RVGVITFPGT…YSVLDSVISA (222 aa)). The Nucleophile role is filled by C87. Active-site residues include H196 and E198.

Part of the FGAM synthase complex composed of 1 PurL, 1 PurQ and 2 PurS subunits.

The protein resides in the cytoplasm. It carries out the reaction N(2)-formyl-N(1)-(5-phospho-beta-D-ribosyl)glycinamide + L-glutamine + ATP + H2O = 2-formamido-N(1)-(5-O-phospho-beta-D-ribosyl)acetamidine + L-glutamate + ADP + phosphate + H(+). The catalysed reaction is L-glutamine + H2O = L-glutamate + NH4(+). It participates in purine metabolism; IMP biosynthesis via de novo pathway; 5-amino-1-(5-phospho-D-ribosyl)imidazole from N(2)-formyl-N(1)-(5-phospho-D-ribosyl)glycinamide: step 1/2. Its function is as follows. Part of the phosphoribosylformylglycinamidine synthase complex involved in the purines biosynthetic pathway. Catalyzes the ATP-dependent conversion of formylglycinamide ribonucleotide (FGAR) and glutamine to yield formylglycinamidine ribonucleotide (FGAM) and glutamate. The FGAM synthase complex is composed of three subunits. PurQ produces an ammonia molecule by converting glutamine to glutamate. PurL transfers the ammonia molecule to FGAR to form FGAM in an ATP-dependent manner. PurS interacts with PurQ and PurL and is thought to assist in the transfer of the ammonia molecule from PurQ to PurL. This Rhodococcus jostii (strain RHA1) protein is Phosphoribosylformylglycinamidine synthase subunit PurQ.